A 365-amino-acid polypeptide reads, in one-letter code: Metallophosphoesterase 1 homolog (365 aa).

A helical transmembrane segment spans residues 10–30 (PILLAIILVVYNEYFIFFIAF). Residues Asp54, Asp96, Asn132, His208, His262, and His264 each coordinate a divalent metal cation. The helical transmembrane segment at 319-339 (ILQIMVYIFGGIGIVILAFIL) threads the bilayer.

It belongs to the metallophosphoesterase superfamily. MPPE1 family. The cofactor is Mn(2+).

It localises to the endoplasmic reticulum-Golgi intermediate compartment membrane. The protein resides in the golgi apparatus. Its subcellular location is the cis-Golgi network membrane. Functionally, metallophosphoesterase required for transport of GPI-anchor proteins from the endoplasmic reticulum to the Golgi. Acts in lipid remodeling steps of GPI-anchor maturation by mediating the removal of a side-chain ethanolamine-phosphate (EtNP) from the second Man (Man2) of the GPI intermediate, an essential step for efficient transport of GPI-anchor proteins. This chain is Metallophosphoesterase 1 homolog, found in Caenorhabditis elegans.